Here is a 424-residue protein sequence, read N- to C-terminus: UPF0229 protein PC1_1960 (424 aa).

Residues 46 to 109 (IESGESVSIP…GQGDASKDGE (64 aa)) are disordered. Over residues 77 to 90 (PGNDHFVQNDKIER) the composition is skewed to basic and acidic residues. A compositionally biased stretch (gly residues) spans 92 to 101 (QGGGGGGSGQ).

It belongs to the UPF0229 family.

This chain is UPF0229 protein PC1_1960, found in Pectobacterium carotovorum subsp. carotovorum (strain PC1).